Here is a 154-residue protein sequence, read N- to C-terminus: Protein X (154 aa).

Residues 68–117 (PCALRFTSARRMETTVNAHQVLPKVLYKRTLGLSAMSTTDLEAYFKDCLF) are mitochondrial targeting sequence.

The protein belongs to the orthohepadnavirus protein X family. May form homodimer. May interact with host CEBPA, CFLAR, CREB1, DDB1, E4F1, HBXIP, HSPD1/HSP60, NFKBIA, POLR2E and SMAD4. Interacts with host SMC5-SMC6 complex and induces its degradation. Interacts with host TRPC4AP; leading to prevent ubiquitination of TRPC4AP. Interacts with host PLSCR1; this interaction promotes ubiquitination and degradation of HBx and impairs HBx-mediated cell proliferation. Post-translationally, a fraction may be phosphorylated in insect cells and HepG2 cells, a human hepatoblastoma cell line. Phosphorylated in vitro by host protein kinase C or mitogen-activated protein kinase. N-acetylated in insect cells.

It is found in the host cytoplasm. Its subcellular location is the host nucleus. The protein resides in the host mitochondrion. In terms of biological role, multifunctional protein that plays a role in silencing host antiviral defenses and promoting viral transcription. Does not seem to be essential for HBV infection. May be directly involved in development of cirrhosis and liver cancer (hepatocellular carcinoma). Most of cytosolic activities involve modulation of cytosolic calcium. The effect on apoptosis is controversial depending on the cell types in which the studies have been conducted. May induce apoptosis by localizing in mitochondria and causing loss of mitochondrial membrane potential. May also modulate apoptosis by binding host CFLAR, a key regulator of the death-inducing signaling complex (DISC). Promotes viral transcription by using the host E3 ubiquitin ligase DDB1 to target the SMC5-SMC6 complex to proteasomal degradation. This host complex would otherwise bind to viral episomal DNA, and prevents its transcription. Moderately stimulates transcription of many different viral and cellular transcription elements. Promoters and enhancers stimulated by HBx contain DNA binding sites for NF-kappa-B, AP-1, AP-2, c-EBP, ATF/CREB, or the calcium-activated factor NF-AT. This Homo sapiens (Human) protein is Protein X.